Here is a 570-residue protein sequence, read N- to C-terminus: Proline--tRNA ligase (570 aa).

It belongs to the class-II aminoacyl-tRNA synthetase family. ProS type 1 subfamily. Homodimer.

The protein localises to the cytoplasm. It catalyses the reaction tRNA(Pro) + L-proline + ATP = L-prolyl-tRNA(Pro) + AMP + diphosphate. Functionally, catalyzes the attachment of proline to tRNA(Pro) in a two-step reaction: proline is first activated by ATP to form Pro-AMP and then transferred to the acceptor end of tRNA(Pro). As ProRS can inadvertently accommodate and process non-cognate amino acids such as alanine and cysteine, to avoid such errors it has two additional distinct editing activities against alanine. One activity is designated as 'pretransfer' editing and involves the tRNA(Pro)-independent hydrolysis of activated Ala-AMP. The other activity is designated 'posttransfer' editing and involves deacylation of mischarged Ala-tRNA(Pro). The misacylated Cys-tRNA(Pro) is not edited by ProRS. The polypeptide is Proline--tRNA ligase (Neisseria gonorrhoeae (strain ATCC 700825 / FA 1090)).